The chain runs to 416 residues: Gamma-glutamyl phosphate reductase (416 aa).

The protein belongs to the gamma-glutamyl phosphate reductase family.

It localises to the cytoplasm. It carries out the reaction L-glutamate 5-semialdehyde + phosphate + NADP(+) = L-glutamyl 5-phosphate + NADPH + H(+). Its pathway is amino-acid biosynthesis; L-proline biosynthesis; L-glutamate 5-semialdehyde from L-glutamate: step 2/2. In terms of biological role, catalyzes the NADPH-dependent reduction of L-glutamate 5-phosphate into L-glutamate 5-semialdehyde and phosphate. The product spontaneously undergoes cyclization to form 1-pyrroline-5-carboxylate. The protein is Gamma-glutamyl phosphate reductase of Streptococcus thermophilus (strain CNRZ 1066).